A 210-amino-acid chain; its full sequence is Syntaxin-binding protein 6 (210 aa).

Ser2 carries the N-acetylserine modification. The 60-residue stretch at 151 to 210 (GNSILHSAADSVTSAVQKASQALNERGERLGRAEEKTEDLKNSAQQFAETAHKLAMKHKC) folds into the v-SNARE coiled-coil homology domain.

In terms of assembly, part of a ternary complex containing SNAP25 and STX1A that can be dissociated by NAPA and NSF. Interacts with STX4A.

The protein resides in the cytoplasm. Its subcellular location is the membrane. Its function is as follows. Forms non-fusogenic complexes with SNAP25 and STX1A and may thereby modulate the formation of functional SNARE complexes and exocytosis. The sequence is that of Syntaxin-binding protein 6 (STXBP6) from Bos taurus (Bovine).